A 296-amino-acid chain; its full sequence is 4-hydroxy-tetrahydrodipicolinate synthase (296 aa).

Threonine 49 contributes to the pyruvate binding site. Tyrosine 137 acts as the Proton donor/acceptor in catalysis. The active-site Schiff-base intermediate with substrate is the lysine 166. Isoleucine 208 contacts pyruvate.

This sequence belongs to the DapA family. In terms of assembly, homotetramer; dimer of dimers.

The protein resides in the cytoplasm. The catalysed reaction is L-aspartate 4-semialdehyde + pyruvate = (2S,4S)-4-hydroxy-2,3,4,5-tetrahydrodipicolinate + H2O + H(+). Its pathway is amino-acid biosynthesis; L-lysine biosynthesis via DAP pathway; (S)-tetrahydrodipicolinate from L-aspartate: step 3/4. In terms of biological role, catalyzes the condensation of (S)-aspartate-beta-semialdehyde [(S)-ASA] and pyruvate to 4-hydroxy-tetrahydrodipicolinate (HTPA). In Chlorobium phaeobacteroides (strain DSM 266 / SMG 266 / 2430), this protein is 4-hydroxy-tetrahydrodipicolinate synthase.